The sequence spans 162 residues: Glutathione peroxidase-like peroxiredoxin 2 (162 aa).

C37 functions as the Cysteine sulfenic acid (-SOH) intermediate in the catalytic mechanism. Cysteines 37 and 83 form a disulfide.

This sequence belongs to the glutathione peroxidase family. In terms of assembly, monomer.

The protein localises to the cytoplasm. The protein resides in the nucleus. It is found in the mitochondrion outer membrane. It localises to the mitochondrion inner membrane. It carries out the reaction a hydroperoxide + [thioredoxin]-dithiol = an alcohol + [thioredoxin]-disulfide + H2O. Glutathione peroxidase-like protein that protects cells from phospholipid hydroperoxides and nonphospholipid peroxides during oxidative stress. Plays an important role in the oxidative stress-induced response in the presence of Ca(2+). Has peroxidase activity using preferentially thioredoxin as a reducing power. The redox state of the mitochondrial GPX2 is regulated by TRX1 and TRX2 (cytoplasmic thioredoxin), and by TRX3 (mitochondrial matrix thioredoxin). Involved in sporulation. In Saccharomyces cerevisiae (strain ATCC 204508 / S288c) (Baker's yeast), this protein is Glutathione peroxidase-like peroxiredoxin 2.